We begin with the raw amino-acid sequence, 367 residues long: Anhydro-N-acetylmuramic acid kinase (367 aa).

Residue 11 to 18 (GTSLDGVD) coordinates ATP.

The protein belongs to the anhydro-N-acetylmuramic acid kinase family.

The enzyme catalyses 1,6-anhydro-N-acetyl-beta-muramate + ATP + H2O = N-acetyl-D-muramate 6-phosphate + ADP + H(+). It participates in amino-sugar metabolism; 1,6-anhydro-N-acetylmuramate degradation. It functions in the pathway cell wall biogenesis; peptidoglycan recycling. Its function is as follows. Catalyzes the specific phosphorylation of 1,6-anhydro-N-acetylmuramic acid (anhMurNAc) with the simultaneous cleavage of the 1,6-anhydro ring, generating MurNAc-6-P. Is required for the utilization of anhMurNAc either imported from the medium or derived from its own cell wall murein, and thus plays a role in cell wall recycling. The protein is Anhydro-N-acetylmuramic acid kinase of Rhodopseudomonas palustris (strain HaA2).